The chain runs to 206 residues: Large ribosomal subunit protein uL4 (206 aa).

The protein belongs to the universal ribosomal protein uL4 family. In terms of assembly, part of the 50S ribosomal subunit.

Functionally, one of the primary rRNA binding proteins, this protein initially binds near the 5'-end of the 23S rRNA. It is important during the early stages of 50S assembly. It makes multiple contacts with different domains of the 23S rRNA in the assembled 50S subunit and ribosome. Its function is as follows. Forms part of the polypeptide exit tunnel. This Paracoccus denitrificans (strain Pd 1222) protein is Large ribosomal subunit protein uL4.